A 436-amino-acid polypeptide reads, in one-letter code: 3-ketoacyl-CoA thiolase (436 aa).

Cys-99 functions as the Acyl-thioester intermediate in the catalytic mechanism. Active-site proton acceptor residues include His-392 and Cys-422.

The protein belongs to the thiolase-like superfamily. Thiolase family. As to quaternary structure, heterotetramer of two alpha chains (FadJ) and two beta chains (FadI).

It is found in the cytoplasm. The catalysed reaction is an acyl-CoA + acetyl-CoA = a 3-oxoacyl-CoA + CoA. The protein operates within lipid metabolism; fatty acid beta-oxidation. Functionally, catalyzes the final step of fatty acid oxidation in which acetyl-CoA is released and the CoA ester of a fatty acid two carbons shorter is formed. The chain is 3-ketoacyl-CoA thiolase from Salmonella paratyphi C (strain RKS4594).